The primary structure comprises 279 residues: Tryptophan synthase alpha chain (279 aa).

Catalysis depends on proton acceptor residues glutamate 50 and aspartate 61.

It belongs to the TrpA family. As to quaternary structure, tetramer of two alpha and two beta chains.

It carries out the reaction (1S,2R)-1-C-(indol-3-yl)glycerol 3-phosphate + L-serine = D-glyceraldehyde 3-phosphate + L-tryptophan + H2O. Its pathway is amino-acid biosynthesis; L-tryptophan biosynthesis; L-tryptophan from chorismate: step 5/5. In terms of biological role, the alpha subunit is responsible for the aldol cleavage of indoleglycerol phosphate to indole and glyceraldehyde 3-phosphate. This Brucella suis biovar 1 (strain 1330) protein is Tryptophan synthase alpha chain.